Reading from the N-terminus, the 558-residue chain is Dihydroxy-acid dehydratase (558 aa).

Residue Asp78 coordinates Mg(2+). Residue Cys119 coordinates [2Fe-2S] cluster. 2 residues coordinate Mg(2+): Asp120 and Lys121. Lys121 is subject to N6-carboxylysine. Cys192 serves as a coordination point for [2Fe-2S] cluster. Glu446 is a Mg(2+) binding site. Ser472 acts as the Proton acceptor in catalysis.

Belongs to the IlvD/Edd family. As to quaternary structure, homodimer. The cofactor is [2Fe-2S] cluster. Requires Mg(2+) as cofactor.

It carries out the reaction (2R)-2,3-dihydroxy-3-methylbutanoate = 3-methyl-2-oxobutanoate + H2O. The catalysed reaction is (2R,3R)-2,3-dihydroxy-3-methylpentanoate = (S)-3-methyl-2-oxopentanoate + H2O. The protein operates within amino-acid biosynthesis; L-isoleucine biosynthesis; L-isoleucine from 2-oxobutanoate: step 3/4. It participates in amino-acid biosynthesis; L-valine biosynthesis; L-valine from pyruvate: step 3/4. In terms of biological role, functions in the biosynthesis of branched-chain amino acids. Catalyzes the dehydration of (2R,3R)-2,3-dihydroxy-3-methylpentanoate (2,3-dihydroxy-3-methylvalerate) into 2-oxo-3-methylpentanoate (2-oxo-3-methylvalerate) and of (2R)-2,3-dihydroxy-3-methylbutanoate (2,3-dihydroxyisovalerate) into 2-oxo-3-methylbutanoate (2-oxoisovalerate), the penultimate precursor to L-isoleucine and L-valine, respectively. The polypeptide is Dihydroxy-acid dehydratase (Campylobacter jejuni subsp. jejuni serotype O:2 (strain ATCC 700819 / NCTC 11168)).